The chain runs to 387 residues: BTB and MATH domain-containing protein 38 (387 aa).

Residues 79 to 204 enclose the MATH domain; it reads EGMLKLEIPN…NEMVTVTARV (126 aa). Residues 228–295 form the BTB domain; it reads CDMTLVINKQ…IYPCHKPITS (68 aa).

The sequence is that of BTB and MATH domain-containing protein 38 (bath-38) from Caenorhabditis elegans.